Here is a 318-residue protein sequence, read N- to C-terminus: MAILEQPYLDLLQKIMSEGHGKDDRTGTGTRSYFGAQMRFDLSQGFPLLTTKKVPFGLIKSELLWFLRGDTNIRFLLEHNNHIWDEWAFKNWVNSSEYQGPDMTDFGLRSQSDPEFNKIYQAEMKKFDQRILDDEDFAKKYGNLGDVYGAQWRHWEKREGGFIDQIADVIKQIKETPDSRRMIVTAWNPEDVPTSALPPCHVMFQFYVVDGKISVQLYQRSGDMFLGVPFNIASYSLLLNLIARETGLQVGEFIHTLGDAHIYRNHLKQVEELLSRKPYDSPQLWLNPEKKNIADFEMKDIKVVDYQHHGTIKAPVAV.

DUMP-binding positions include Arg25 and Arg180–Arg181. Cys200 (nucleophile) is an active-site residue. DUMP contacts are provided by residues Arg220 to Asp223, Asn231, and His261 to Tyr263. Asp223 contributes to the (6R)-5,10-methylene-5,6,7,8-tetrahydrofolate binding site. Ala317 lines the (6R)-5,10-methylene-5,6,7,8-tetrahydrofolate pocket.

The protein belongs to the thymidylate synthase family. Bacterial-type ThyA subfamily. Homodimer.

It is found in the cytoplasm. It catalyses the reaction dUMP + (6R)-5,10-methylene-5,6,7,8-tetrahydrofolate = 7,8-dihydrofolate + dTMP. The protein operates within pyrimidine metabolism; dTTP biosynthesis. Catalyzes the reductive methylation of 2'-deoxyuridine-5'-monophosphate (dUMP) to 2'-deoxythymidine-5'-monophosphate (dTMP) while utilizing 5,10-methylenetetrahydrofolate (mTHF) as the methyl donor and reductant in the reaction, yielding dihydrofolate (DHF) as a by-product. This enzymatic reaction provides an intracellular de novo source of dTMP, an essential precursor for DNA biosynthesis. The sequence is that of Thymidylate synthase from Lactobacillus helveticus (strain DPC 4571).